Consider the following 101-residue polypeptide: Small ribosomal subunit protein uS14A (101 aa).

The tract at residues 35–56 (TSSYEQRLDAQRALSRQPRDAS) is disordered.

It belongs to the universal ribosomal protein uS14 family. As to quaternary structure, part of the 30S ribosomal subunit. Contacts proteins S3 and S10.

In terms of biological role, binds 16S rRNA, required for the assembly of 30S particles and may also be responsible for determining the conformation of the 16S rRNA at the A site. This chain is Small ribosomal subunit protein uS14A, found in Mycobacterium marinum (strain ATCC BAA-535 / M).